The chain runs to 257 residues: MLKIADKQFHSRLFTGTGKFANSQLMSQAIEQSGSQLATMALKRVDIHNQQDDILSPLLSAGVNLLPNTSGAKNAKDAIFAAHLAREALGTNWLKLEIHPDPKYLMPDPIETLAAAEQLVKDGFVVLPYCHADPVLCKRLEEVGCAAVMPLGAPIGSNKGLVSQDFLQIIIDQAKVPVVVDAGIGAPSHAAYAMELGADAVLVNTAIAAARDPIAMARAFKLAVEAGRLAYESGLAGKVSHAVASSPLTSFLDECLS.

Lys-95 acts as the Schiff-base intermediate with DXP in catalysis. 1-deoxy-D-xylulose 5-phosphate is bound by residues Gly-156, 182-183 (AG), and 204-205 (NT).

Belongs to the ThiG family. In terms of assembly, homotetramer. Forms heterodimers with either ThiH or ThiS.

It is found in the cytoplasm. The enzyme catalyses [ThiS sulfur-carrier protein]-C-terminal-Gly-aminoethanethioate + 2-iminoacetate + 1-deoxy-D-xylulose 5-phosphate = [ThiS sulfur-carrier protein]-C-terminal Gly-Gly + 2-[(2R,5Z)-2-carboxy-4-methylthiazol-5(2H)-ylidene]ethyl phosphate + 2 H2O + H(+). It functions in the pathway cofactor biosynthesis; thiamine diphosphate biosynthesis. Catalyzes the rearrangement of 1-deoxy-D-xylulose 5-phosphate (DXP) to produce the thiazole phosphate moiety of thiamine. Sulfur is provided by the thiocarboxylate moiety of the carrier protein ThiS. In vitro, sulfur can be provided by H(2)S. The chain is Thiazole synthase from Vibrio vulnificus (strain CMCP6).